We begin with the raw amino-acid sequence, 243 residues long: Probable fructoselysine utilization operon transcriptional repressor (243 aa).

Residues 10–78 (QLLYATVRQR…QGKGTFVQSQ (69 aa)) enclose the HTH gntR-type domain. Residues 38–57 (ENELCTQYNVSRITIRKAIS) constitute a DNA-binding region (H-T-H motif).

It participates in carbohydrate metabolism; fructoselysine degradation [regulation]. In terms of biological role, may regulate the transcription of the frlABCDR operon, involved in the utilization of fructoselysine and psicoselysine. This Shigella flexneri protein is Probable fructoselysine utilization operon transcriptional repressor (frlR).